The following is a 295-amino-acid chain: Probable ketoamine kinase slr1563 (295 aa).

Residue 99–101 coordinates ATP; that stretch reads EWL. Catalysis depends on Asp201, which acts as the Proton acceptor.

This sequence belongs to the fructosamine kinase family.

In terms of biological role, ketoamine kinase that phosphorylates ketoamines on the third carbon of the sugar moiety to generate ketoamine 3-phosphate. The protein is Probable ketoamine kinase slr1563 of Synechocystis sp. (strain ATCC 27184 / PCC 6803 / Kazusa).